A 701-amino-acid polypeptide reads, in one-letter code: Ribosomal RNA large subunit methyltransferase K/L (701 aa).

A THUMP domain is found at 43–154; sequence LLYQSLMWSR…KETAHISLDL (112 aa).

This sequence belongs to the methyltransferase superfamily. RlmKL family.

The protein resides in the cytoplasm. The catalysed reaction is guanosine(2445) in 23S rRNA + S-adenosyl-L-methionine = N(2)-methylguanosine(2445) in 23S rRNA + S-adenosyl-L-homocysteine + H(+). It catalyses the reaction guanosine(2069) in 23S rRNA + S-adenosyl-L-methionine = N(2)-methylguanosine(2069) in 23S rRNA + S-adenosyl-L-homocysteine + H(+). Specifically methylates the guanine in position 2445 (m2G2445) and the guanine in position 2069 (m7G2069) of 23S rRNA. This chain is Ribosomal RNA large subunit methyltransferase K/L, found in Klebsiella pneumoniae (strain 342).